We begin with the raw amino-acid sequence, 140 residues long: Large ribosomal subunit protein uL16 (140 aa).

Basic residues predominate over residues 1-16; it reads MLMPKRVKHRKQMKGR. Residues 1-20 are disordered; it reads MLMPKRVKHRKQMKGRMKGD.

It belongs to the universal ribosomal protein uL16 family. In terms of assembly, part of the 50S ribosomal subunit.

Its function is as follows. Binds 23S rRNA and is also seen to make contacts with the A and possibly P site tRNAs. In Geobacter sulfurreducens (strain ATCC 51573 / DSM 12127 / PCA), this protein is Large ribosomal subunit protein uL16.